The chain runs to 557 residues: Urocanate hydratase (557 aa).

NAD(+) is bound by residues 53–54 (GG), Gln-131, 177–179 (GMG), Glu-197, Arg-202, 243–244 (NA), 264–268 (QTSAH), 274–275 (YL), and Tyr-323. The active site involves Cys-411. The tract at residues 445–464 (LDSGSVSSPNRETESMRDGS) is disordered. Positions 455–464 (RETESMRDGS) are enriched in basic and acidic residues. An NAD(+)-binding site is contributed by Gly-493.

This sequence belongs to the urocanase family. NAD(+) is required as a cofactor.

It localises to the cytoplasm. It carries out the reaction 4-imidazolone-5-propanoate = trans-urocanate + H2O. The protein operates within amino-acid degradation; L-histidine degradation into L-glutamate; N-formimidoyl-L-glutamate from L-histidine: step 2/3. Its function is as follows. Catalyzes the conversion of urocanate to 4-imidazolone-5-propionate. The chain is Urocanate hydratase from Pseudomonas putida (strain W619).